A 305-amino-acid chain; its full sequence is Protoheme IX farnesyltransferase 2 (305 aa).

8 helical membrane passes run L38–G58, I60–I80, I115–I135, I157–V177, I181–L201, V227–G247, L249–L269, and F285–F305.

This sequence belongs to the UbiA prenyltransferase family. Protoheme IX farnesyltransferase subfamily. Interacts with CtaA.

It localises to the cell membrane. It catalyses the reaction heme b + (2E,6E)-farnesyl diphosphate + H2O = Fe(II)-heme o + diphosphate. Its pathway is porphyrin-containing compound metabolism; heme O biosynthesis; heme O from protoheme: step 1/1. Functionally, converts heme B (protoheme IX) to heme O by substitution of the vinyl group on carbon 2 of heme B porphyrin ring with a hydroxyethyl farnesyl side group. The protein is Protoheme IX farnesyltransferase 2 (ctaB2) of Bacillus subtilis (strain 168).